The sequence spans 287 residues: MSWLEKILPKSKITTPRRHNIPEGVWTKCSACEQVLYRAELERNLEVCPKCDHHMRISARARLESFLDEQGRTEVGAELEPQDILKFKDSKRYKDRLSAAQKATGEKDALVVMKGTLKGVPVVACSFEFSFIGGSMSSVVGARFVRAVEECIKEGRGLVCFSASGGARMQEALFSLMQMAKTSAALDRLTKAGLPYISVLTDPTMGGVSASLAMLGDINVGEPKALIGFAGPRVIEQTVREKLPEGFQRSEFLLEKGAIDLIIDRREMRNRLASLLAKMLNTHVIEE.

The region spanning 25–287 (VWTKCSACEQ…KMLNTHVIEE (263 aa)) is the CoA carboxyltransferase N-terminal domain. Zn(2+) is bound by residues C29, C32, C48, and C51. The segment at 29 to 51 (CSACEQVLYRAELERNLEVCPKC) adopts a C4-type zinc-finger fold.

It belongs to the AccD/PCCB family. Acetyl-CoA carboxylase is a heterohexamer composed of biotin carboxyl carrier protein (AccB), biotin carboxylase (AccC) and two subunits each of ACCase subunit alpha (AccA) and ACCase subunit beta (AccD). Zn(2+) serves as cofactor.

Its subcellular location is the cytoplasm. It carries out the reaction N(6)-carboxybiotinyl-L-lysyl-[protein] + acetyl-CoA = N(6)-biotinyl-L-lysyl-[protein] + malonyl-CoA. The protein operates within lipid metabolism; malonyl-CoA biosynthesis; malonyl-CoA from acetyl-CoA: step 1/1. Component of the acetyl coenzyme A carboxylase (ACC) complex. Biotin carboxylase (BC) catalyzes the carboxylation of biotin on its carrier protein (BCCP) and then the CO(2) group is transferred by the transcarboxylase to acetyl-CoA to form malonyl-CoA. The sequence is that of Acetyl-coenzyme A carboxylase carboxyl transferase subunit beta from Aeromonas salmonicida (strain A449).